The chain runs to 426 residues: Enolase (426 aa).

Residue glutamine 165 participates in (2R)-2-phosphoglycerate binding. The active-site Proton donor is glutamate 209. 3 residues coordinate Mg(2+): aspartate 244, glutamate 287, and aspartate 313. (2R)-2-phosphoglycerate contacts are provided by lysine 338, arginine 367, serine 368, and lysine 389. The Proton acceptor role is filled by lysine 338.

This sequence belongs to the enolase family. The cofactor is Mg(2+).

The protein resides in the cytoplasm. It is found in the secreted. It localises to the cell surface. It carries out the reaction (2R)-2-phosphoglycerate = phosphoenolpyruvate + H2O. It functions in the pathway carbohydrate degradation; glycolysis; pyruvate from D-glyceraldehyde 3-phosphate: step 4/5. Its function is as follows. Catalyzes the reversible conversion of 2-phosphoglycerate (2-PG) into phosphoenolpyruvate (PEP). It is essential for the degradation of carbohydrates via glycolysis. The sequence is that of Enolase from Methanococcus maripaludis (strain DSM 14266 / JCM 13030 / NBRC 101832 / S2 / LL).